Reading from the N-terminus, the 464-residue chain is Chitotriosidase-1 (464 aa).

Residues 1–21 form the signal peptide; the sequence is MVQSLAWAGVMTLLMVQWGSA. One can recognise a GH18 domain in the interval 22–386; sequence AKLVCYLTNW…RTLRQELNLP (365 aa). An intrachain disulfide couples Cys-26 to Cys-51. Chitin is bound by residues 70 to 71 and 97 to 100; these read EH and GGWT. Glu-140 functions as the Proton donor in the catalytic mechanism. 210 to 213 provides a ligand contact to chitin; that stretch reads MAYD. A disulfide bridge connects residues Cys-307 and Cys-368. Positions 385-416 are disordered; sequence LPSETPRSPEQIIPEPRPSSMPEQGPSPGLDN. Residues 415 to 464 form the Chitin-binding type-2 domain; it reads DNFCQGKADGVYPNPGDESTYYNCGGGRLFQQSCPPGLVFRASCKCCTWS. Cys-448 and Cys-461 are joined by a disulfide.

The protein belongs to the glycosyl hydrolase 18 family. Chitinase class II subfamily. In terms of assembly, monomer. Highly expressed in tongue, stomach, kidney, brain, skin, testis, and bone marrow. Low level of expression was found in lung, heart, spleen, small intestine, and liver. Not detectable in pancreas, salivary gland, large intestine, uterus, or peripheral blood mononuclear cells (PBMC).

It localises to the secreted. The protein localises to the lysosome. It catalyses the reaction Random endo-hydrolysis of N-acetyl-beta-D-glucosaminide (1-&gt;4)-beta-linkages in chitin and chitodextrins.. Functionally, degrades chitin, chitotriose and chitobiose. May participate in the defense against nematodes and other pathogens. The protein is Chitotriosidase-1 (Chit1) of Mus musculus (Mouse).